The following is a 190-amino-acid chain: dTTP/UTP pyrophosphatase (190 aa).

Catalysis depends on Asp-71, which acts as the Proton acceptor.

Belongs to the Maf family. YhdE subfamily. A divalent metal cation is required as a cofactor.

The protein localises to the cytoplasm. The enzyme catalyses dTTP + H2O = dTMP + diphosphate + H(+). It carries out the reaction UTP + H2O = UMP + diphosphate + H(+). Nucleoside triphosphate pyrophosphatase that hydrolyzes dTTP and UTP. May have a dual role in cell division arrest and in preventing the incorporation of modified nucleotides into cellular nucleic acids. This chain is dTTP/UTP pyrophosphatase, found in Xanthomonas axonopodis pv. citri (strain 306).